The following is a 69-amino-acid chain: Small, acid-soluble spore protein C4 (69 aa).

It belongs to the alpha/beta-type SASP family.

Its function is as follows. SASP are bound to spore DNA. They are double-stranded DNA-binding proteins that cause DNA to change to an a-like conformation. They protect the DNA backbone from chemical and enzymatic cleavage and are thus involved in dormant spore's high resistance to UV light. In Priestia megaterium (Bacillus megaterium), this protein is Small, acid-soluble spore protein C4 (SASP-C4).